Here is a 370-residue protein sequence, read N- to C-terminus: Cytoplasmic envelopment protein 2 (370 aa).

This sequence belongs to the herpesviridae cytoplasmic envelopment protein 2 family. Interacts with cytoplasmic envelopment protein 3 and with the capsid.

It is found in the virion tegument. Its subcellular location is the host cytoplasm. The protein resides in the host nucleus. In terms of biological role, plays a critical role in cytoplasmic virus egress. Participates in the final step of tegumentation and envelope acquisition within the host cytoplasm by directly interacting with the capsid. Upon virion binding to target cell, a signaling cascade is triggered to disrupt the interaction with the capsid, thereby preparing capsid uncoating. The protein is Cytoplasmic envelopment protein 2 of Equine herpesvirus 1 (strain V592) (EHV-1).